Consider the following 616-residue polypeptide: Dihydroxy-acid dehydratase (616 aa).

Asp-81 serves as a coordination point for Mg(2+). Cys-122 serves as a coordination point for [2Fe-2S] cluster. Mg(2+) contacts are provided by Asp-123 and Lys-124. Lys-124 is modified (N6-carboxylysine). Cys-195 provides a ligand contact to [2Fe-2S] cluster. A Mg(2+)-binding site is contributed by Glu-491. Ser-517 (proton acceptor) is an active-site residue.

Belongs to the IlvD/Edd family. In terms of assembly, homodimer. The cofactor is [2Fe-2S] cluster. Requires Mg(2+) as cofactor.

The catalysed reaction is (2R)-2,3-dihydroxy-3-methylbutanoate = 3-methyl-2-oxobutanoate + H2O. It carries out the reaction (2R,3R)-2,3-dihydroxy-3-methylpentanoate = (S)-3-methyl-2-oxopentanoate + H2O. Its pathway is amino-acid biosynthesis; L-isoleucine biosynthesis; L-isoleucine from 2-oxobutanoate: step 3/4. It functions in the pathway amino-acid biosynthesis; L-valine biosynthesis; L-valine from pyruvate: step 3/4. Functionally, functions in the biosynthesis of branched-chain amino acids. Catalyzes the dehydration of (2R,3R)-2,3-dihydroxy-3-methylpentanoate (2,3-dihydroxy-3-methylvalerate) into 2-oxo-3-methylpentanoate (2-oxo-3-methylvalerate) and of (2R)-2,3-dihydroxy-3-methylbutanoate (2,3-dihydroxyisovalerate) into 2-oxo-3-methylbutanoate (2-oxoisovalerate), the penultimate precursor to L-isoleucine and L-valine, respectively. The protein is Dihydroxy-acid dehydratase of Escherichia coli O17:K52:H18 (strain UMN026 / ExPEC).